The chain runs to 299 residues: Coenzyme PQQ synthesis protein B (299 aa).

Belongs to the PqqB family.

It participates in cofactor biosynthesis; pyrroloquinoline quinone biosynthesis. May be involved in the transport of PQQ or its precursor to the periplasm. In Methylobacterium nodulans (strain LMG 21967 / CNCM I-2342 / ORS 2060), this protein is Coenzyme PQQ synthesis protein B.